A 523-amino-acid chain; its full sequence is Cytochrome P450 52A3-A (523 aa).

Residues Trp-17–Leu-34 traverse the membrane as a helical segment. Residue Cys-471 coordinates heme.

It belongs to the cytochrome P450 family. The cofactor is heme.

It localises to the membrane. In terms of biological role, together with an NADPH cytochrome P450 the enzyme system catalyzes the terminal hydroxylation as the first step in the assimilation of alkanes and fatty acids. The protein is Cytochrome P450 52A3-A (CYP52A3-A) of Candida maltosa (Yeast).